A 100-amino-acid chain; its full sequence is NADH-quinone oxidoreductase subunit K (100 aa).

3 helical membrane passes run 4–24, 28–48, and 60–80; these read YEYY…GVIV, IIAM…AFVA, and VFVF…LGLI.

Belongs to the complex I subunit 4L family. In terms of assembly, NDH-1 is composed of 14 different subunits. Subunits NuoA, H, J, K, L, M, N constitute the membrane sector of the complex.

It localises to the cell inner membrane. It carries out the reaction a quinone + NADH + 5 H(+)(in) = a quinol + NAD(+) + 4 H(+)(out). NDH-1 shuttles electrons from NADH, via FMN and iron-sulfur (Fe-S) centers, to quinones in the respiratory chain. The immediate electron acceptor for the enzyme in this species is believed to be ubiquinone. Couples the redox reaction to proton translocation (for every two electrons transferred, four hydrogen ions are translocated across the cytoplasmic membrane), and thus conserves the redox energy in a proton gradient. The protein is NADH-quinone oxidoreductase subunit K of Sulfurihydrogenibium azorense (strain DSM 15241 / OCM 825 / Az-Fu1).